We begin with the raw amino-acid sequence, 46 residues long: Small polypeptide DEVIL 5 (46 aa).

A helical membrane pass occupies residues Val-8–Val-24. A required for DVL/RTFL small polypeptide activity region spans residues Met-15–Asp-46.

It belongs to the DVL/RTFL small polypeptides family. Mostly expressed in roots and flowers, and, to a lower extent, in leaves and stems.

It is found in the cell membrane. Functionally, small polypeptide acting as a regulatory molecule which coordinates cellular responses required for differentiation, growth and development, including leaves shape, pedicule elongation, inflorescence organization and fruit maturation, probably by restricting polar cell proliferation in lateral organs and coordinating socket cell recruitment and differentiation at trichome sites. The chain is Small polypeptide DEVIL 5 from Arabidopsis thaliana (Mouse-ear cress).